The sequence spans 310 residues: Translocator protein BipD (310 aa).

2 coiled-coil regions span residues 127 to 171 (DPIL…LQDY) and 250 to 299 (DTAR…AIST).

It belongs to the invasin protein D family.

The protein localises to the secreted. Its function is as follows. Required for invasion of epithelial cells, as well as for survival within host cells, escape from endocytic vesicles and subsequent actin-tail formation. Probably regulates the secretion of effectors BipB and BipC and their final integration into the target cell membrane. This Burkholderia thailandensis (strain ATCC 700388 / DSM 13276 / CCUG 48851 / CIP 106301 / E264) protein is Translocator protein BipD (bipD).